Reading from the N-terminus, the 185-residue chain is Lactoylglutathione lyase (185 aa).

The segment at 1–21 (MASEAKESPANNPGLSTVRDE) is disordered. The VOC domain maps to 27–174 (IMQQTMFRVK…DGYWIEIFDL (148 aa)). Q30 and R34 together coordinate substrate. Q30 lines the Zn(2+) pocket. E96 contributes to the Zn(2+) binding site. Substrate contacts are provided by residues N100, R120, H124, and 154–155 (KM). H124 contacts Zn(2+). E170 serves as a coordination point for Zn(2+). Residue E170 is the Proton donor/acceptor of the active site.

It belongs to the glyoxalase I family. Requires Zn(2+) as cofactor.

The enzyme catalyses (R)-S-lactoylglutathione = methylglyoxal + glutathione. Its pathway is secondary metabolite metabolism; methylglyoxal degradation; (R)-lactate from methylglyoxal: step 1/2. Functionally, catalyzes the conversion of hemimercaptal, formed from methylglyoxal and glutathione, to S-lactoylglutathione. The chain is Lactoylglutathione lyase (GLY I) from Brassica juncea (Indian mustard).